Consider the following 120-residue polypeptide: Putative membrane protein insertion efficiency factor (120 aa).

Residues 93–120 are disordered; sequence GRSCQTDVDGANDDWNPASKRGERESFV.

Belongs to the UPF0161 family.

Its subcellular location is the cell membrane. Functionally, could be involved in insertion of integral membrane proteins into the membrane. The chain is Putative membrane protein insertion efficiency factor from Mycobacterium bovis (strain ATCC BAA-935 / AF2122/97).